The following is a 124-amino-acid chain: Small ribosomal subunit protein eS8 (124 aa).

The span at 1–22 (MQYQGRSKRSKTGARLRPRSKK) shows a compositional bias: basic residues. 2 disordered regions span residues 1–40 (MQYQ…GEPR) and 102–124 (AGTA…RVDE). Residues 23–32 (SKSELGREPT) show a composition bias toward basic and acidic residues. Residues 106–124 (RVTSRPGQDGQVNATRVDE) are compositionally biased toward polar residues.

Belongs to the eukaryotic ribosomal protein eS8 family. In terms of assembly, part of the 30S ribosomal subunit.

The protein is Small ribosomal subunit protein eS8 of Halobacterium salinarum (strain ATCC 29341 / DSM 671 / R1).